The following is a 296-amino-acid chain: Lipoyl synthase (296 aa).

7 residues coordinate [4Fe-4S] cluster: cysteine 35, cysteine 40, cysteine 46, cysteine 61, cysteine 65, cysteine 68, and serine 274. In terms of domain architecture, Radical SAM core spans 47-263 (WSSKHVTVMI…KEAAYARGFL (217 aa)).

This sequence belongs to the radical SAM superfamily. Lipoyl synthase family. [4Fe-4S] cluster is required as a cofactor.

It localises to the cytoplasm. It carries out the reaction [[Fe-S] cluster scaffold protein carrying a second [4Fe-4S](2+) cluster] + N(6)-octanoyl-L-lysyl-[protein] + 2 oxidized [2Fe-2S]-[ferredoxin] + 2 S-adenosyl-L-methionine + 4 H(+) = [[Fe-S] cluster scaffold protein] + N(6)-[(R)-dihydrolipoyl]-L-lysyl-[protein] + 4 Fe(3+) + 2 hydrogen sulfide + 2 5'-deoxyadenosine + 2 L-methionine + 2 reduced [2Fe-2S]-[ferredoxin]. The protein operates within protein modification; protein lipoylation via endogenous pathway; protein N(6)-(lipoyl)lysine from octanoyl-[acyl-carrier-protein]: step 2/2. Its function is as follows. Catalyzes the radical-mediated insertion of two sulfur atoms into the C-6 and C-8 positions of the octanoyl moiety bound to the lipoyl domains of lipoate-dependent enzymes, thereby converting the octanoylated domains into lipoylated derivatives. The protein is Lipoyl synthase of Neorickettsia sennetsu (strain ATCC VR-367 / Miyayama) (Ehrlichia sennetsu).